The primary structure comprises 80 residues: Raniseptin-1 (80 aa).

Positions 1–22 (MAFLKKSLFLVLFLGIVSLSIC) are cleaved as a signal peptide. Residues 23 to 49 (EEEKREGEEEEKQEEENEELSEEELRE) constitute a propeptide that is removed on maturation.

This sequence belongs to the frog skin active peptide (FSAP) family. Dermaseptin subfamily. In terms of tissue distribution, expressed by the skin glands.

Its subcellular location is the secreted. In terms of biological role, has antibacterial activity against the Gram-negative bacteria E.coli ATCC 25922 (MIC=5 uM), P.aeruginosa ATCC 27853 (MIC=10 uM) and X.citri (MIC&lt; 2 uM), and the Gram-positive bacterium S.aureus ATCC 29313 (MIC=20 uM). Does not have hemolytic activity against human erythrocytes. The polypeptide is Raniseptin-1 (Boana raniceps (Chaco tree frog)).